Reading from the N-terminus, the 538-residue chain is 2-isopropylmalate synthase (538 aa).

In terms of domain architecture, Pyruvate carboxyltransferase spans Leu6–Asp277. Asp15, His206, His208, and Asn242 together coordinate Mn(2+). Residues Arg406 to Leu538 are regulatory domain.

The protein belongs to the alpha-IPM synthase/homocitrate synthase family. LeuA type 1 subfamily. As to quaternary structure, homodimer. The cofactor is Mn(2+).

It is found in the cytoplasm. The catalysed reaction is 3-methyl-2-oxobutanoate + acetyl-CoA + H2O = (2S)-2-isopropylmalate + CoA + H(+). It functions in the pathway amino-acid biosynthesis; L-leucine biosynthesis; L-leucine from 3-methyl-2-oxobutanoate: step 1/4. Its function is as follows. Catalyzes the condensation of the acetyl group of acetyl-CoA with 3-methyl-2-oxobutanoate (2-ketoisovalerate) to form 3-carboxy-3-hydroxy-4-methylpentanoate (2-isopropylmalate). This Gloeobacter violaceus (strain ATCC 29082 / PCC 7421) protein is 2-isopropylmalate synthase.